Consider the following 108-residue polypeptide: Iron-sulfur cluster assembly protein CyaY (108 aa).

This sequence belongs to the frataxin family.

Its function is as follows. Involved in iron-sulfur (Fe-S) cluster assembly. May act as a regulator of Fe-S biogenesis. The polypeptide is Iron-sulfur cluster assembly protein CyaY (Burkholderia vietnamiensis (strain G4 / LMG 22486) (Burkholderia cepacia (strain R1808))).